Reading from the N-terminus, the 436-residue chain is UDP-N-acetylmuramate--L-alanine ligase (436 aa).

Residue 108–114 participates in ATP binding; sequence GAHGKTS.

Belongs to the MurCDEF family.

The protein resides in the cytoplasm. It catalyses the reaction UDP-N-acetyl-alpha-D-muramate + L-alanine + ATP = UDP-N-acetyl-alpha-D-muramoyl-L-alanine + ADP + phosphate + H(+). The protein operates within cell wall biogenesis; peptidoglycan biosynthesis. Its function is as follows. Cell wall formation. In Bacillus cereus (strain AH187), this protein is UDP-N-acetylmuramate--L-alanine ligase.